We begin with the raw amino-acid sequence, 202 residues long: Dephospho-CoA kinase (202 aa).

Residues 6-202 (KVSITGDLSS…EYFYALKGAL (197 aa)) enclose the DPCK domain. Residue 14 to 19 (SSGKTE) participates in ATP binding.

Belongs to the CoaE family.

It is found in the cytoplasm. It catalyses the reaction 3'-dephospho-CoA + ATP = ADP + CoA + H(+). The protein operates within cofactor biosynthesis; coenzyme A biosynthesis; CoA from (R)-pantothenate: step 5/5. In terms of biological role, catalyzes the phosphorylation of the 3'-hydroxyl group of dephosphocoenzyme A to form coenzyme A. In Chlamydia felis (strain Fe/C-56) (Chlamydophila felis), this protein is Dephospho-CoA kinase.